Here is a 590-residue protein sequence, read N- to C-terminus: Aspartate--tRNA(Asp/Asn) ligase (590 aa).

E176 provides a ligand contact to L-aspartate. Positions 200-203 are aspartate; that stretch reads QLFK. 2 residues coordinate L-aspartate: R222 and H451. 222-224 lines the ATP pocket; sequence RDE. An ATP-binding site is contributed by E485. Position 492 (R492) interacts with L-aspartate. Residue 537 to 540 participates in ATP binding; it reads GIDR.

It belongs to the class-II aminoacyl-tRNA synthetase family. Type 1 subfamily. As to quaternary structure, homodimer.

It is found in the cytoplasm. It catalyses the reaction tRNA(Asx) + L-aspartate + ATP = L-aspartyl-tRNA(Asx) + AMP + diphosphate. Aspartyl-tRNA synthetase with relaxed tRNA specificity since it is able to aspartylate not only its cognate tRNA(Asp) but also tRNA(Asn). Reaction proceeds in two steps: L-aspartate is first activated by ATP to form Asp-AMP and then transferred to the acceptor end of tRNA(Asp/Asn). The sequence is that of Aspartate--tRNA(Asp/Asn) ligase from Ehrlichia ruminantium (strain Welgevonden).